The chain runs to 435 residues: uncharacterized protein (435 aa).

The residue at position 47 (S47) is a Phosphoserine. Disordered regions lie at residues L174–D210 and K290–K372. Positions N195 to D210 are enriched in acidic residues. The span at K290–A304 shows a compositional bias: basic and acidic residues. Residues S308–T318 show a composition bias toward polar residues. 2 stretches are compositionally biased toward basic and acidic residues: residues E322–N340 and V347–D361.

The protein localises to the cytoplasm. This is an uncharacterized protein from Saccharomyces cerevisiae (strain ATCC 204508 / S288c) (Baker's yeast).